The following is a 358-amino-acid chain: UPF0725 protein At4g29550 (358 aa).

A disordered region spans residues 31–82; that stretch reads LNKHPPSGSGWTDEDDDNDDVFSSSFISKEELSDAVHNDPPSGWTDEDDDDQ. Over residues 58–67 the composition is skewed to basic and acidic residues; sequence SKEELSDAVH.

Belongs to the UPF0725 (EMB2204) family.

This is UPF0725 protein At4g29550 from Arabidopsis thaliana (Mouse-ear cress).